Here is a 277-residue protein sequence, read N- to C-terminus: Phosphonates import ATP-binding protein PhnC 2 (277 aa).

The 249-residue stretch at 3-251 (ISLNGISVQH…LLQALYAQHL (249 aa)) folds into the ABC transporter domain. 40–47 (GPSGAGKT) contributes to the ATP binding site.

The protein belongs to the ABC transporter superfamily. Phosphonates importer (TC 3.A.1.9.1) family. The complex is composed of two ATP-binding proteins (PhnC), two transmembrane proteins (PhnE) and a solute-binding protein (PhnD).

It localises to the cell inner membrane. It carries out the reaction phosphonate(out) + ATP + H2O = phosphonate(in) + ADP + phosphate + H(+). Functionally, part of the ABC transporter complex PhnCDE involved in phosphonates import. Responsible for energy coupling to the transport system. The sequence is that of Phosphonates import ATP-binding protein PhnC 2 from Albidiferax ferrireducens (strain ATCC BAA-621 / DSM 15236 / T118) (Rhodoferax ferrireducens).